A 276-amino-acid polypeptide reads, in one-letter code: NADPH-dependent 7-cyano-7-deazaguanine reductase (276 aa).

A substrate-binding site is contributed by 83–85; the sequence is IES. Position 85–86 (85–86) interacts with NADPH; the sequence is SK. Cys-184 serves as the catalytic Thioimide intermediate. Asp-191 serves as the catalytic Proton donor. 223 to 224 is a binding site for substrate; the sequence is HE. 252 to 253 contacts NADPH; it reads RG.

The protein belongs to the GTP cyclohydrolase I family. QueF type 2 subfamily. In terms of assembly, homodimer.

It localises to the cytoplasm. It carries out the reaction 7-aminomethyl-7-carbaguanine + 2 NADP(+) = 7-cyano-7-deazaguanine + 2 NADPH + 3 H(+). Its pathway is tRNA modification; tRNA-queuosine biosynthesis. Catalyzes the NADPH-dependent reduction of 7-cyano-7-deazaguanine (preQ0) to 7-aminomethyl-7-deazaguanine (preQ1). This Pseudomonas savastanoi pv. phaseolicola (strain 1448A / Race 6) (Pseudomonas syringae pv. phaseolicola (strain 1448A / Race 6)) protein is NADPH-dependent 7-cyano-7-deazaguanine reductase.